Consider the following 453-residue polypeptide: Iron-sulfur cluster assembly SufBD family protein slr0076 (453 aa).

It belongs to the iron-sulfur cluster assembly SufBD family.

The sequence is that of Iron-sulfur cluster assembly SufBD family protein slr0076 from Synechocystis sp. (strain ATCC 27184 / PCC 6803 / Kazusa).